The primary structure comprises 144 residues: Bombinins BLP-7/GH-2 (144 aa).

The first 18 residues, 1 to 18 (MNFKYIVAVSFLIASTYA), serve as a signal peptide directing secretion. The propeptide occupies 19 to 43 (RSVKNDEQSLSQRDVLEEESLREIR). Asn70 bears the Asparagine amide mark. Residues 74–123 (TAEEHEVMKRLEAVMRDLDSLDYPEEASEMETRSFNQEEIANLFTKKEKR) constitute a propeptide that is removed on maturation. Position 143 is an isoleucine amide (Ile143).

This sequence belongs to the bombinin family. As to expression, expressed by the skin glands.

Its subcellular location is the secreted. Its function is as follows. Antimicrobial peptide with activity against Gram-positive and -negative bacteria and fungi. Shows activity against P.acnes (MIC=5 uM), E.coli (MIC=5-6.3 uM), S.aureus (MIC=5-6.3 uM), M.luteus, S.cerevisiae and C.albicans (MIC=10-12.5 uM). Also reduces the production of interleukin (IL)-8 and granulocyte-macrophage colony stimulating factor (CSF2) in normal human epidermal keratinocytes (NHEKs). Shows anticancer activity against three human hepatoma cell lines. In vivo, using the rat ear edema model, suppress P.acnes-induced skin inflammation, significantly reducing the ear thickness. Shows weak hemolytic activity against human erythrocytes. In terms of biological role, shows weak antimicrobial activity but high hemolytic activity. In Bombina orientalis (Oriental fire-bellied toad), this protein is Bombinins BLP-7/GH-2.